The following is a 674-amino-acid chain: Pesticidal crystal protein Cry24Aa (674 aa).

The protein belongs to the delta endotoxin family.

Functionally, promotes colloidosmotic lysis by binding to the midgut epithelial cells of insects. This Bacillus thuringiensis subsp. jegathesan protein is Pesticidal crystal protein Cry24Aa (cry24Aa).